Consider the following 335-residue polypeptide: DDRGK domain-containing protein 1 (335 aa).

At 1 to 6 (MGDTYS) the chain is on the lumenal side. Residues 7-27 (LVLVAGYLSIFLFIGAIGYFY) form a helical membrane-spanning segment. The Cytoplasmic portion of the chain corresponds to 28–335 (LSKPRIPSSN…NNDQDPVDTN (308 aa)). A disordered region spans residues 37–124 (NVNEQQQQQQ…GEDIGVVAPG (88 aa)). Composition is skewed to low complexity over residues 41–56 (QQQQ…QQPQ) and 91–103 (SSGS…TNSD). Positions 104-117 (NYDDDNGQEGEGED) are enriched in acidic residues.

The protein belongs to the DDRGK1 family.

The protein localises to the endoplasmic reticulum membrane. Its function is as follows. Substrate adapter for ufmylation, the covalent attachment of the ubiquitin-like modifier UFM1 to substrate proteins. This is DDRGK domain-containing protein 1 from Dictyostelium discoideum (Social amoeba).